The primary structure comprises 153 residues: Aspartate carbamoyltransferase regulatory chain (153 aa).

Zn(2+) is bound by residues Cys109, Cys114, Cys138, and Cys141.

Belongs to the PyrI family. As to quaternary structure, contains catalytic and regulatory chains. Zn(2+) serves as cofactor.

Functionally, involved in allosteric regulation of aspartate carbamoyltransferase. In Shigella dysenteriae serotype 1 (strain Sd197), this protein is Aspartate carbamoyltransferase regulatory chain.